Reading from the N-terminus, the 213-residue chain is MRMNEPVDAQPAPSFLPMSRRFRGYLPVVVDVETGGFDWNKHALLEIACVPIEMGADGRFFPGETASAHLVPAPGLEIDPKSLEITGIVLDHPFRFAKQEKEALDHVFAPVRAAVKKYGCQRAILVGHNAHFDLNFLNAAVARVGHKRNPFHPFSVFDTVTLAGVAYGQTVLARAAQAAGLDWNAADAHSAVYDTEQTARLFCKIANAWPGPV.

Residues 28 to 202 (VVVDVETGGF…YDTEQTARLF (175 aa)) enclose the Exonuclease domain. Mg(2+) contacts are provided by Asp-31, Glu-33, His-189, and Asp-194. The active-site Proton donor/acceptor is the His-189.

Belongs to the RNase T family. Homodimer. Mg(2+) serves as cofactor.

Functionally, trims short 3' overhangs of a variety of RNA species, leaving a one or two nucleotide 3' overhang. Responsible for the end-turnover of tRNA: specifically removes the terminal AMP residue from uncharged tRNA (tRNA-C-C-A). Also appears to be involved in tRNA biosynthesis. In Xanthomonas axonopodis pv. citri (strain 306), this protein is Ribonuclease T.